The primary structure comprises 620 residues: Glutathione-regulated potassium-efflux system protein KefC (620 aa).

Over 1-3 (MDS) the chain is Periplasmic. The chain crosses the membrane as a helical span at residues 4–24 (HTLIQALIYLGSAALIVPIAV). Position 25 (Arg25) is a topological domain, cytoplasmic. Residues 26–46 (LGLGSVLGYLIAGCIIGPWGL) form a helical membrane-spanning segment. The Periplasmic portion of the chain corresponds to 47–53 (RLVTDAE). A helical membrane pass occupies residues 54 to 74 (SILHFAEIGVVLMLFIIGLEL). Residues 75-89 (DPQRLWKLRAAVFGG) lie on the Cytoplasmic side of the membrane. A helical membrane pass occupies residues 90-110 (GALQMVICGGLLGLFCMLLGL). At 111-113 (RWQ) the chain is on the periplasmic side. A helical membrane pass occupies residues 114-134 (VAELIGMTLALSSTAIAMQAM). Residues 135-148 (NERNLMVTQMGRSA) lie on the Cytoplasmic side of the membrane. Residues 149 to 169 (FAVLLFQDIAAIPLVAMIPLL) form a helical membrane-spanning segment. The Periplasmic segment spans residues 170–177 (AASSASTT). Residues 178–198 (MGAFVLSALKVAGALALVVLL) traverse the membrane as a helical segment. Residues 199 to 213 (GRYVTRPALRFVARS) are Cytoplasmic-facing. The helical transmembrane segment at 214 to 233 (GLREVFSAVALFLVFGFGLL) threads the bilayer. At 234 to 236 (LEE) the chain is on the periplasmic side. A helical transmembrane segment spans residues 237–254 (VGLSMAMGAFLAGVLLAS). Residues 255 to 269 (SEYRHALESDIEPFK) are Cytoplasmic-facing. Residues 270 to 290 (GLLLGLFFIGVGMSIDFGTLL) form a helical membrane-spanning segment. Over 291–293 (ENP) the chain is Periplasmic. Residues 294–314 (LRIVILLLGFLIIKIAMLWLI) form a helical membrane-spanning segment. Residues 315-326 (ARPLQVPNKQRR) are Cytoplasmic-facing. Residues 327 to 347 (WFAVLLGQGSEFAFVVFGAAQ) traverse the membrane as a helical segment. The Periplasmic segment spans residues 348 to 358 (MANVLEPEWAK). Residues 359 to 379 (SLTLAVALSMAATPILLVILN) form a helical membrane-spanning segment. The Cytoplasmic segment spans residues 380-620 (RLEQSSTEEA…ADEPETKPSS (241 aa)). The RCK N-terminal domain maps to 399–518 (QPRVIIAGFG…AGVEKPERET (120 aa)). Residues 597–620 (GWQGTEEGKHTGNMADEPETKPSS) form a disordered region.

The protein belongs to the monovalent cation:proton antiporter 2 (CPA2) transporter (TC 2.A.37) family. KefC subfamily. As to quaternary structure, homodimer. Interacts with the regulatory subunit KefF.

It localises to the cell inner membrane. In terms of biological role, pore-forming subunit of a potassium efflux system that confers protection against electrophiles. Catalyzes K(+)/H(+) antiport. This Escherichia coli O6:H1 (strain CFT073 / ATCC 700928 / UPEC) protein is Glutathione-regulated potassium-efflux system protein KefC.